We begin with the raw amino-acid sequence, 303 residues long: Pyridoxal 5'-phosphate synthase subunit PdxS (303 aa).

D33 lines the D-ribose 5-phosphate pocket. K90 (schiff-base intermediate with D-ribose 5-phosphate) is an active-site residue. G162 contacts D-ribose 5-phosphate. Residue R174 coordinates D-glyceraldehyde 3-phosphate. D-ribose 5-phosphate is bound by residues G223 and 244-245; that span reads GS.

It belongs to the PdxS/SNZ family. In the presence of PdxT, forms a dodecamer of heterodimers.

The enzyme catalyses aldehydo-D-ribose 5-phosphate + D-glyceraldehyde 3-phosphate + L-glutamine = pyridoxal 5'-phosphate + L-glutamate + phosphate + 3 H2O + H(+). Its pathway is cofactor biosynthesis; pyridoxal 5'-phosphate biosynthesis. Functionally, catalyzes the formation of pyridoxal 5'-phosphate from ribose 5-phosphate (RBP), glyceraldehyde 3-phosphate (G3P) and ammonia. The ammonia is provided by the PdxT subunit. Can also use ribulose 5-phosphate and dihydroxyacetone phosphate as substrates, resulting from enzyme-catalyzed isomerization of RBP and G3P, respectively. This is Pyridoxal 5'-phosphate synthase subunit PdxS from Mycolicibacterium smegmatis (strain ATCC 700084 / mc(2)155) (Mycobacterium smegmatis).